Consider the following 434-residue polypeptide: Adenylosuccinate synthetase (434 aa).

GTP is bound by residues 14–20 (GDEGKGK) and 42–44 (GHE). Asp15 acts as the Proton acceptor in catalysis. Mg(2+)-binding residues include Asp15 and Gly42. IMP contacts are provided by residues 15-18 (DEGK), 40-43 (NSGH), Thr133, Arg147, Asn229, Thr244, and Arg308. Catalysis depends on His43, which acts as the Proton donor. 304-310 (VTTGRVR) lines the substrate pocket. GTP is bound by residues Arg310, 336-338 (KLD), and 422-424 (GTG).

The protein belongs to the adenylosuccinate synthetase family. Homodimer. Mg(2+) is required as a cofactor.

It is found in the cytoplasm. The catalysed reaction is IMP + L-aspartate + GTP = N(6)-(1,2-dicarboxyethyl)-AMP + GDP + phosphate + 2 H(+). It participates in purine metabolism; AMP biosynthesis via de novo pathway; AMP from IMP: step 1/2. Functionally, plays an important role in the salvage pathway for purine nucleotide biosynthesis. Catalyzes the first committed step in the biosynthesis of AMP from IMP. This Theileria parva (East coast fever infection agent) protein is Adenylosuccinate synthetase.